Here is a 252-residue protein sequence, read N- to C-terminus: Imidazole glycerol phosphate synthase subunit HisF (252 aa).

Catalysis depends on residues aspartate 11 and aspartate 130.

The protein belongs to the HisA/HisF family. In terms of assembly, heterodimer of HisH and HisF.

The protein localises to the cytoplasm. It catalyses the reaction 5-[(5-phospho-1-deoxy-D-ribulos-1-ylimino)methylamino]-1-(5-phospho-beta-D-ribosyl)imidazole-4-carboxamide + L-glutamine = D-erythro-1-(imidazol-4-yl)glycerol 3-phosphate + 5-amino-1-(5-phospho-beta-D-ribosyl)imidazole-4-carboxamide + L-glutamate + H(+). Its pathway is amino-acid biosynthesis; L-histidine biosynthesis; L-histidine from 5-phospho-alpha-D-ribose 1-diphosphate: step 5/9. IGPS catalyzes the conversion of PRFAR and glutamine to IGP, AICAR and glutamate. The HisF subunit catalyzes the cyclization activity that produces IGP and AICAR from PRFAR using the ammonia provided by the HisH subunit. The polypeptide is Imidazole glycerol phosphate synthase subunit HisF (Bacillus cereus (strain AH820)).